A 130-amino-acid polypeptide reads, in one-letter code: MVRQVKKSSLKKNKKVAANGVVHIQSTFNNTIVTLSTLEGDTVAWASSGAIGFKGAKKGTPFAAQIAAEKATKEAISQGMKKAEVLINGPGSGRETAIRALQAAGLEITLIRDITPVPHNGCRPPKKLRV.

The protein belongs to the universal ribosomal protein uS11 family. As to quaternary structure, part of the 30S ribosomal subunit.

It localises to the plastid. It is found in the chloroplast. This Guillardia theta (Cryptophyte) protein is Small ribosomal subunit protein uS11c.